The chain runs to 411 residues: Ferrochelatase, mitochondrial (411 aa).

The transit peptide at 1–41 (MAAFRAAHRLLGHILRNESSAGLVTQRWSSSAAVASVPKSS) directs the protein to the mitochondrion. The disordered stretch occupies residues 34 to 55 (VASVPKSSDPKPHAQPDKRKPK). Positions 41-51 (SDPKPHAQPDK) are enriched in basic and acidic residues. Protoporphyrin IX contacts are provided by R102, Y110, and S117. C183 lines the [2Fe-2S] cluster pocket. Catalysis depends on residues H217 and D370. 3 residues coordinate [2Fe-2S] cluster: C390, C393, and C398.

This sequence belongs to the ferrochelatase family. As to quaternary structure, homodimer. Homotetramer. [2Fe-2S] cluster is required as a cofactor.

It localises to the mitochondrion inner membrane. The enzyme catalyses heme b + 2 H(+) = protoporphyrin IX + Fe(2+). It functions in the pathway porphyrin-containing compound metabolism; protoheme biosynthesis; protoheme from protoporphyrin-IX: step 1/1. Functionally, catalyzes the ferrous insertion into protoporphyrin IX. The protein is Ferrochelatase, mitochondrial of Xenopus laevis (African clawed frog).